We begin with the raw amino-acid sequence, 502 residues long: Ribose import ATP-binding protein RbsA (502 aa).

ABC transporter domains follow at residues 3–239 and 249–493; these read VTMR…VGRE and AAPG…TGGA. ATP is bound at residue 35–42; it reads GENGAGKS.

Belongs to the ABC transporter superfamily. Ribose importer (TC 3.A.1.2.1) family. In terms of assembly, the complex is composed of an ATP-binding protein (RbsA), two transmembrane proteins (RbsC) and a solute-binding protein (RbsB).

It localises to the cell inner membrane. It catalyses the reaction D-ribose(out) + ATP + H2O = D-ribose(in) + ADP + phosphate + H(+). Part of the ABC transporter complex RbsABC involved in ribose import. Responsible for energy coupling to the transport system. The chain is Ribose import ATP-binding protein RbsA from Chromobacterium violaceum (strain ATCC 12472 / DSM 30191 / JCM 1249 / CCUG 213 / NBRC 12614 / NCIMB 9131 / NCTC 9757 / MK).